The sequence spans 846 residues: Protein kintoun (846 aa).

Disordered stretches follow at residues 1–21 (MSTA…ERAD), 377–412 (DSGV…PPDP), 581–657 (HTSI…DSTI), and 743–846 (HDSS…DDEI). Phosphoserine is present on serine 378. A compositionally biased stretch (low complexity) spans 399–408 (PETPELETAA). Composition is skewed to basic residues over residues 596 to 612 (LHKK…KKQR) and 750 to 766 (QRKK…RAQQ). Residue serine 770 is modified to Phosphoserine. Basic and acidic residues predominate over residues 821-832 (TRQDHADADAKN).

This sequence belongs to the PIH1 family. Kintoun subfamily. As to quaternary structure, interacts with Pp1alpha-96A, Pp1-87B, Pp1-13C and flw.

Its subcellular location is the cytoplasm. Its function is as follows. Required for cytoplasmic pre-assembly of axonemal dyneins, thereby playing a central role in motility in cilia and flagella. Involved in pre-assembly of dynein arm complexes in the cytoplasm before intraflagellar transport loads them for the ciliary compartment. The polypeptide is Protein kintoun (Drosophila pseudoobscura pseudoobscura (Fruit fly)).